Here is a 596-residue protein sequence, read N- to C-terminus: Probable tripeptidyl-peptidase SED2 (596 aa).

Residues 1–16 form the signal peptide; the sequence is MRLLKFVCLLASVAAA. Residues 17–203 constitute a propeptide, removed in mature form; that stretch reads KPTPGASHKV…LESMSVEEFA (187 aa). The 387-residue stretch at 210 to 596 folds into the Peptidase S53 domain; that stretch reads LVTTACLREL…NFQALTKVLP (387 aa). Residue Asn-265 is glycosylated (N-linked (GlcNAc...) asparagine). Catalysis depends on charge relay system residues Glu-286 and Asp-290. N-linked (GlcNAc...) asparagine glycosylation is present at Asn-403. Ser-501 serves as the catalytic Charge relay system. Ca(2+) is bound by residues Asp-543 and Ile-544. N-linked (GlcNAc...) asparagine glycosylation is present at Asn-572. Ca(2+) contacts are provided by Gly-576 and Asp-578.

The cofactor is Ca(2+).

It localises to the secreted. Its subcellular location is the extracellular space. It carries out the reaction Release of an N-terminal tripeptide from a polypeptide.. Secreted tripeptidyl-peptidase which degrades proteins at acidic pHs and is involved in virulence. The protein is Probable tripeptidyl-peptidase SED2 (SED2) of Trichophyton verrucosum (strain HKI 0517).